We begin with the raw amino-acid sequence, 209 residues long: Ribonuclease HII (209 aa).

One can recognise an RNase H type-2 domain in the interval 19–208; it reads GLVAGVDEAG…VARALQAPVA (190 aa). The a divalent metal cation site is built by aspartate 25, glutamate 26, and aspartate 117.

It belongs to the RNase HII family. It depends on Mn(2+) as a cofactor. Mg(2+) is required as a cofactor.

The protein localises to the cytoplasm. The enzyme catalyses Endonucleolytic cleavage to 5'-phosphomonoester.. Endonuclease that specifically degrades the RNA of RNA-DNA hybrids. The polypeptide is Ribonuclease HII (Acidovorax ebreus (strain TPSY) (Diaphorobacter sp. (strain TPSY))).